A 422-amino-acid polypeptide reads, in one-letter code: Synaptotagmin-2 (422 aa).

The segment at 1-43 (MRNIFKRNQEPNVAPATTTATMPLAPVAPADNSTESTGPGESQ) is disordered. Residues 1–60 (MRNIFKRNQEPNVAPATTTATMPLAPVAPADNSTESTGPGESQEDMFAKLKEKFFNEINK) are Vesicular-facing. The span at 14 to 30 (APATTTATMPLAPVAPA) shows a compositional bias: low complexity. The segment covering 31–40 (DNSTESTGPG) has biased composition (polar residues). The N-linked (GlcNAc...) asparagine glycan is linked to Asn-32. Residues 61–87 (IPLPPWALIAMAVVAGLLLLTCCFCIC) traverse the membrane as a helical segment. Residues 88-422 (KKCCCKKKKN…EVDALLGKNK (335 aa)) lie on the Cytoplasmic side of the membrane. The segment at 102-141 (GKGMKNAMNMKDMKGGQDDDDAETGLTEGEGEGEEEKEPE) is disordered. A compositionally biased stretch (acidic residues) spans 119 to 139 (DDDDAETGLTEGEGEGEEEKE). A phosphothreonine mark is found at Thr-125 and Thr-128. A phospholipid binding region spans residues 136–382 (EEKEPENLGK…AIGKIFVGSN (247 aa)). C2 domains follow at residues 142 to 261 (NLGK…EEWR) and 273 to 406 (KLGD…AQWH). Residues Leu-172, Asp-173, and Asp-179 each coordinate Ca(2+). At Thr-202 the chain carries Phosphothreonine. Tyr-230 is subject to Phosphotyrosine. Residues Asp-231, Phe-232, Asp-233, Ser-236, Lys-237, Asp-239, Asp-304, Asp-310, Asp-364, and Asp-366 each coordinate Ca(2+). Residue Thr-386 is modified to Phosphothreonine.

Belongs to the synaptotagmin family. In terms of assembly, homotetramer. Heterodimer; heterodimerizes with SYT1 in presence of calcium. Interacts with SCAMP5. Interacts with STON2. Interacts with PRRT2. (Microbial infection) Interacts with C.botulinum neurotoxin type B (BoNT/B, botB). As to quaternary structure, (Microbial infection) Interacts with C.botulinum neurotoxin type G (BoNT/G, botG). Requires Ca(2+) as cofactor. In terms of processing, phosphorylation at Thr-202 by WNK1, changes the calcium requirement for SYT2-binding to phospholipid membranes.

Its subcellular location is the cytoplasmic vesicle. It localises to the secretory vesicle. The protein localises to the synaptic vesicle membrane. It is found in the chromaffin granule membrane. The protein resides in the cytoplasm. Functionally, exhibits calcium-dependent phospholipid and inositol polyphosphate binding properties. May have a regulatory role in the membrane interactions during trafficking of synaptic vesicles at the active zone of the synapse. Plays a role in dendrite formation by melanocytes. In terms of biological role, (Microbial infection) Receptor for C.botulinum neurotoxin type B (BoNT/B, botB); interaction is improved in the presence of gangliosides. The toxin binds via the vesicular domain (residues 47-60). Its function is as follows. (Microbial infection) Receptor for C.botulinum neurotoxin type G (BoNT/G, botG); gangliosides are not required for (or only very slightly improve) binding to a membrane-anchored receptor fragment. The toxin binds via the vesicular domain (residues 47-55). The protein is Synaptotagmin-2 of Mus musculus (Mouse).